The primary structure comprises 252 residues: Ribosomal RNA small subunit methyltransferase J (252 aa).

Residues 126–127 (ER) and D176 contribute to the S-adenosyl-L-methionine site.

The protein belongs to the methyltransferase superfamily. RsmJ family.

It is found in the cytoplasm. The enzyme catalyses guanosine(1516) in 16S rRNA + S-adenosyl-L-methionine = N(2)-methylguanosine(1516) in 16S rRNA + S-adenosyl-L-homocysteine + H(+). Specifically methylates the guanosine in position 1516 of 16S rRNA. This Bdellovibrio bacteriovorus (strain ATCC 15356 / DSM 50701 / NCIMB 9529 / HD100) protein is Ribosomal RNA small subunit methyltransferase J.